Here is a 284-residue protein sequence, read N- to C-terminus: D-tagatose-1,6-bisphosphate aldolase subunit GatY (284 aa).

The active-site Proton donor is Asp-82. Zn(2+) is bound by residues His-83 and His-180. Gly-181 contributes to the dihydroxyacetone phosphate binding site. A Zn(2+)-binding site is contributed by His-208. Residues Gly-209–Ser-211 and Asn-230–Thr-233 contribute to the dihydroxyacetone phosphate site.

This sequence belongs to the class II fructose-bisphosphate aldolase family. TagBP aldolase GatY subfamily. As to quaternary structure, forms a complex with GatZ. Zn(2+) is required as a cofactor.

It carries out the reaction D-tagatofuranose 1,6-bisphosphate = D-glyceraldehyde 3-phosphate + dihydroxyacetone phosphate. It functions in the pathway carbohydrate metabolism; D-tagatose 6-phosphate degradation; D-glyceraldehyde 3-phosphate and glycerone phosphate from D-tagatose 6-phosphate: step 2/2. In terms of biological role, catalytic subunit of the tagatose-1,6-bisphosphate aldolase GatYZ, which catalyzes the reversible aldol condensation of dihydroxyacetone phosphate (DHAP or glycerone-phosphate) with glyceraldehyde 3-phosphate (G3P) to produce tagatose 1,6-bisphosphate (TBP). Requires GatZ subunit for full activity and stability. Is involved in the catabolism of galactitol. The sequence is that of D-tagatose-1,6-bisphosphate aldolase subunit GatY from Escherichia coli O7:K1 (strain IAI39 / ExPEC).